The sequence spans 91 residues: Signal recognition particle 19 kDa protein (91 aa).

This sequence belongs to the SRP19 family. As to quaternary structure, part of the signal recognition particle protein translocation system, which is composed of SRP and FtsY. Archaeal SRP consists of a 7S RNA molecule of 300 nucleotides and two protein subunits: SRP54 and SRP19.

Its subcellular location is the cytoplasm. In terms of biological role, involved in targeting and insertion of nascent membrane proteins into the cytoplasmic membrane. Binds directly to 7S RNA and mediates binding of the 54 kDa subunit of the SRP. This chain is Signal recognition particle 19 kDa protein, found in Methanoregula boonei (strain DSM 21154 / JCM 14090 / 6A8).